A 156-amino-acid chain; its full sequence is MKIILNQDVKILGEEGDVKEVAAGYFRNYLYPRNLAVPHNRFTVARFKQRQQDIEMRKSLKRQDAANLKARLEAQPVVIAMPAGTNGKLYGAVTSHTVAEQLACMGFEVERKRVEVPGLTLKCVGNYHVTIRLYEEICAVVPVTIKNQSEADSVSE.

This sequence belongs to the bacterial ribosomal protein bL9 family.

Binds to the 23S rRNA. This is Large ribosomal subunit protein bL9 from Treponema pallidum (strain Nichols).